We begin with the raw amino-acid sequence, 41 residues long: uncharacterized protein (41 aa).

The helical transmembrane segment at 8-28 threads the bilayer; that stretch reads IKKIAMFFLGILVGVFIVLFF.

It is found in the membrane. This is an uncharacterized protein from Streptococcus pneumoniae serotype 2 (strain D39 / NCTC 7466).